A 186-amino-acid chain; its full sequence is Protein SPMIP2 (186 aa).

Positions 163–186 (SSLPRASKPPKLPKLPKKEKKRKH) are disordered. A compositionally biased stretch (basic residues) spans 176–186 (KLPKKEKKRKH).

This is Protein SPMIP2 from Homo sapiens (Human).